Here is a 125-residue protein sequence, read N- to C-terminus: Snaclec VP12 subunit B (125 aa).

3 disulfide bridges follow: Cys-4/Cys-15, Cys-32/Cys-121, and Cys-98/Cys-113. The 112-residue stretch at 11 to 122 folds into the C-type lectin domain; sequence FEKYCYKVFQ…CNDPRYFVCK (112 aa).

Belongs to the snaclec family. In terms of assembly, heterodimer of subunits alpha and beta; disulfide-linked. In terms of tissue distribution, expressed by the venom gland.

It is found in the secreted. Its function is as follows. Inhibits integrin alpha-2/beta-1- (ITGA2/ITGB1) dependent melanoma metastasis. This chain is Snaclec VP12 subunit B, found in Daboia palaestinae (Palestine viper).